The primary structure comprises 396 residues: GTPase Obg (396 aa).

The region spanning 1-159 is the Obg domain; sequence MKFVDEATIY…RNIRLELKVL (159 aa). The OBG-type G domain maps to 160 to 333; sequence ADVGLLGLPN…LCQDIMTWIE (174 aa). GTP is bound by residues 166–173, 191–195, 213–216, 283–286, and 314–316; these read GLPNAGKS, FTTLV, DIPG, NKTD, and SAL. The Mg(2+) site is built by Ser173 and Thr193. Disordered stretches follow at residues 337-356 and 373-396; these read EEER…REQM and LARK…FYAP. The segment covering 347-356 has biased composition (basic and acidic residues); sequence EADRLNREQM. Residues 381-396 are compositionally biased toward acidic residues; it reads SDDDDDDEDVEVFYAP.

The protein belongs to the TRAFAC class OBG-HflX-like GTPase superfamily. OBG GTPase family. As to quaternary structure, monomer. Mg(2+) is required as a cofactor.

It is found in the cytoplasm. Its function is as follows. An essential GTPase which binds GTP, GDP and possibly (p)ppGpp with moderate affinity, with high nucleotide exchange rates and a fairly low GTP hydrolysis rate. Plays a role in control of the cell cycle, stress response, ribosome biogenesis and in those bacteria that undergo differentiation, in morphogenesis control. This is GTPase Obg from Hahella chejuensis (strain KCTC 2396).